Consider the following 510-residue polypeptide: AAA-ATPase At3g28540 (510 aa).

A helical transmembrane segment spans residues 7–25 (LFGFTGTTMASLMFFWSVY). An ATP-binding site is contributed by 246–253 (GPPGTGKS). A disordered region spans residues 460-510 (KEKAKKLAEEEKMKKAARDARRIKKKAEEEHKKKNKVEENGDVSHDNGNHI).

It belongs to the AAA ATPase family. BCS1 subfamily. It depends on Mg(2+) as a cofactor.

The protein resides in the membrane. The catalysed reaction is ATP + H2O = ADP + phosphate + H(+). This chain is AAA-ATPase At3g28540, found in Arabidopsis thaliana (Mouse-ear cress).